Reading from the N-terminus, the 131-residue chain is Small ribosomal subunit protein uS8 (131 aa).

Belongs to the universal ribosomal protein uS8 family. In terms of assembly, part of the 30S ribosomal subunit. Contacts proteins S5 and S12.

Functionally, one of the primary rRNA binding proteins, it binds directly to 16S rRNA central domain where it helps coordinate assembly of the platform of the 30S subunit. The chain is Small ribosomal subunit protein uS8 from Laribacter hongkongensis (strain HLHK9).